Consider the following 393-residue polypeptide: Alpha-pyrone synthesis polyketide synthase-like Pks18 (393 aa).

A disordered region spans residues 1–26 (MNVSAESGAPRRAGQRHEVGLAQLPP). Cysteine 175 serves as the catalytic Nucleophile. Histidine 221 contributes to the substrate binding site.

Belongs to the thiolase-like superfamily. Chalcone/stilbene synthases family. As to quaternary structure, homodimer.

Its pathway is lipid metabolism; fatty acid biosynthesis. Its function is as follows. Involved in the biosynthesis of tri- and tetraketide alpha-pyrones. Pks18 catalyzes the extension of medium- and long-chain aliphatic acyl-CoA substrates by using malonyl-CoA as an extender molecule to synthesize polyketide products. The polypeptide is Alpha-pyrone synthesis polyketide synthase-like Pks18 (pks18) (Mycobacterium bovis (strain ATCC BAA-935 / AF2122/97)).